A 289-amino-acid polypeptide reads, in one-letter code: Phosphoribulokinase (289 aa).

Position 12–20 (12–20 (GSSGAGTTT)) interacts with ATP.

It belongs to the phosphoribulokinase family.

It catalyses the reaction D-ribulose 5-phosphate + ATP = D-ribulose 1,5-bisphosphate + ADP + H(+). It functions in the pathway carbohydrate biosynthesis; Calvin cycle. This is Phosphoribulokinase (cbbP) from Rhizobium meliloti (strain 1021) (Ensifer meliloti).